The primary structure comprises 41 residues: Alpha-conotoxin CIB (41 aa).

The propeptide occupies 1–21; the sequence is SDGRNEAANDEASDVIELALK. Cystine bridges form between Cys-23-Cys-29 and Cys-24-Cys-37. The segment at 25–27 is ser-Xaa-Pro motif, crucial for potent interaction with nAChR; the sequence is SNP. Cys-37 carries the cysteine amide modification.

It belongs to the conotoxin A superfamily. Expressed by the venom duct.

Its subcellular location is the secreted. Its function is as follows. Alpha-conotoxins act on postsynaptic membranes, they bind to the nicotinic acetylcholine receptors (nAChR) and thus inhibit them. This toxin blocks rat neuronal nAChR alpha-3-beta-2/CHRNA3-CHRNB2 (IC(50)=128.9 nM) and alpha-7/CHRNA7 (IC(50)=1511 nM). In vivo, intramuscular injection into zebrafish does not produce any effect on the locomotion of zebrafish. This chain is Alpha-conotoxin CIB, found in Conus catus (Cat cone).